The sequence spans 463 residues: Senescence/dehydration-associated protein At3g51250 (463 aa).

Residues 1-12 are compositionally biased toward basic and acidic residues; the sequence is MNPSHGGDDKQR. 3 disordered regions span residues 1–31, 52–74, and 146–172; these read MNPS…FAST, PNLF…PQAT, and IHPP…KSKS. A compositionally biased stretch (polar residues) spans 19–31; it reads VDQSIPDNPFAST. The 169-residue stretch at 269–437 folds into the Senescence domain; the sequence is IASGSGKLIR…AWVAFKIRKA (169 aa).

This chain is Senescence/dehydration-associated protein At3g51250, found in Arabidopsis thaliana (Mouse-ear cress).